A 51-amino-acid chain; its full sequence is Large ribosomal subunit protein eL39 (51 aa).

The protein belongs to the eukaryotic ribosomal protein eL39 family.

This chain is Large ribosomal subunit protein eL39 (rpl39e), found in Pyrococcus abyssi (strain GE5 / Orsay).